Reading from the N-terminus, the 2710-residue chain is Serine/threonine-protein kinase ATR (2710 aa).

The FAT domain occupies 1647-2257 (TLAKASFRCQ…LWMMAAVSKS (611 aa)). The PI3K/PI4K catalytic domain occupies 2368 to 2680 (IADDAEILNS…GVNAAPSLPL (313 aa)). Residues 2374 to 2380 (ILNSLQK) are G-loop. The segment at 2545–2553 (GLGDRHGEN) is catalytic loop. The activation loop stretch occupies residues 2565 to 2589 (HVDFSCLFDKGLLLEKPEVVPFRFT). The 33-residue stretch at 2678 to 2710 (LPLSVEGQARRLIAEAVSHSNLGKMYVWWMAWF) folds into the FATC domain.

Belongs to the PI3/PI4-kinase family. ATM subfamily.

It localises to the nucleus. The catalysed reaction is L-seryl-[protein] + ATP = O-phospho-L-seryl-[protein] + ADP + H(+). It carries out the reaction L-threonyl-[protein] + ATP = O-phospho-L-threonyl-[protein] + ADP + H(+). In terms of biological role, probable serine/threonine kinase. Seems to play a central role in cell-cycle regulation by transmitting DNA damage signals to downstream effectors of cell-cycle progression. May recognize the substrate consensus sequence [ST]-Q and phosphorylate histone variant H2AX to form H2AXS139ph at sites of DNA damage, thereby regulating DNA damage response mechanism. This Oryza sativa subsp. japonica (Rice) protein is Serine/threonine-protein kinase ATR.